Here is a 443-residue protein sequence, read N- to C-terminus: ATP-dependent protease ATPase subunit HslU (443 aa).

Residues Ile18, 60-65 (GVGKTE), Asp256, Glu321, and Arg393 each bind ATP.

Belongs to the ClpX chaperone family. HslU subfamily. In terms of assembly, a double ring-shaped homohexamer of HslV is capped on each side by a ring-shaped HslU homohexamer. The assembly of the HslU/HslV complex is dependent on binding of ATP.

It localises to the cytoplasm. Its function is as follows. ATPase subunit of a proteasome-like degradation complex; this subunit has chaperone activity. The binding of ATP and its subsequent hydrolysis by HslU are essential for unfolding of protein substrates subsequently hydrolyzed by HslV. HslU recognizes the N-terminal part of its protein substrates and unfolds these before they are guided to HslV for hydrolysis. In Pectobacterium atrosepticum (strain SCRI 1043 / ATCC BAA-672) (Erwinia carotovora subsp. atroseptica), this protein is ATP-dependent protease ATPase subunit HslU.